The following is a 225-amino-acid chain: MPVKLAQALANPLFPALDSALRSGRHIGLDELDNHAFLMDFQEYLEEFYARYNVELIRAPEGFFYLRPRSTTLIPRSVLSELDMMVGKILCYLYLSPERLANEGIFTQQELYDELLTLADEAKLLKLVNNRSTGSDVDRQKLQEKVRSSLNRLRRLGMVWFMGHDSSKFRITESVFRFGADVRAGDDPREAQRRLIRDGEAMPIENHLQLNDETEESQPDSGEEE.

The tract at residues 197–225 (RDGEAMPIENHLQLNDETEESQPDSGEEE) is disordered. Residues 212 to 225 (DETEESQPDSGEEE) show a composition bias toward acidic residues.

The protein belongs to the MukE family. Interacts, and probably forms a ternary complex, with MukF and MukB. The complex formation is stimulated by calcium or magnesium.

Its subcellular location is the cytoplasm. It localises to the nucleoid. Its function is as follows. Involved in chromosome condensation, segregation and cell cycle progression. May participate in facilitating chromosome segregation by condensation DNA from both sides of a centrally located replisome during cell division. Probably acts via its interaction with MukB and MukF. The chain is Chromosome partition protein MukE from Salmonella typhi.